A 673-amino-acid chain; its full sequence is DNA ligase (673 aa).

Residues 38 to 42, 87 to 88, and Glu-119 contribute to the NAD(+) site; these read DSVYD and SL. Residue Lys-121 is the N6-AMP-lysine intermediate of the active site. 4 residues coordinate NAD(+): Arg-142, Glu-179, Lys-296, and Lys-320. 4 residues coordinate Zn(2+): Cys-414, Cys-417, Cys-432, and Cys-438. In terms of domain architecture, BRCT spans 595–673; it reads VVKSEIAGKT…EEAFLKLLKS (79 aa).

It belongs to the NAD-dependent DNA ligase family. LigA subfamily. The cofactor is Mg(2+). It depends on Mn(2+) as a cofactor.

It catalyses the reaction NAD(+) + (deoxyribonucleotide)n-3'-hydroxyl + 5'-phospho-(deoxyribonucleotide)m = (deoxyribonucleotide)n+m + AMP + beta-nicotinamide D-nucleotide.. Its function is as follows. DNA ligase that catalyzes the formation of phosphodiester linkages between 5'-phosphoryl and 3'-hydroxyl groups in double-stranded DNA using NAD as a coenzyme and as the energy source for the reaction. It is essential for DNA replication and repair of damaged DNA. The chain is DNA ligase from Coxiella burnetii (strain RSA 493 / Nine Mile phase I).